Consider the following 209-residue polypeptide: Thymidylate kinase (209 aa).

10–17 lines the ATP pocket; sequence GLEGAGKS.

The protein belongs to the thymidylate kinase family.

The enzyme catalyses dTMP + ATP = dTDP + ADP. Its function is as follows. Phosphorylation of dTMP to form dTDP in both de novo and salvage pathways of dTTP synthesis. The polypeptide is Thymidylate kinase (Photobacterium profundum (strain SS9)).